The following is a 194-amino-acid chain: Interleukin-18 (194 aa).

Residues 1–36 (MAAMSEEGSCVNFKEMMFIDNTLYLIPEDNGDLESD) constitute a propeptide that is removed on maturation.

The protein belongs to the IL-1 family. Forms a ternary complex with ligand-binding receptor subunit IL18R1 and signaling receptor subunit IL18RAP at the plasma membrane. Mature IL18 first binds to IL18R1 forming a low affinity binary complex, which then interacts with IL18RAP to form a high affinity ternary complex that signals inside the cell. Interacts with cargo receptor TMED10; the interaction mediates the translocation from the cytoplasm into the ERGIC (endoplasmic reticulum-Golgi intermediate compartment) and thereby secretion. The pro-IL-18 precursor is processed by CASP1 to yield its mature, active form. The pro-IL-18 precursor is however not processed by Casp4/Casp11 in rodents. The pro-IL-18 precursor features autoinhibitory interactions between the propeptide and the post-cleavage-site region, preventing recognition by the IL18R1 receptor. Processing by CASP1 induces conformational changes to generate critical receptor-binding sites. The mature form is then secreted and released in the extracellular milieu by passing through the gasdermin-D (GSDMD) pore. In contrast, cleavage by CASP3 inactivates IL18.

It localises to the cytoplasm. The protein localises to the cytosol. Its subcellular location is the secreted. Pro-inflammatory cytokine primarily involved in epithelial barrier repair, polarized T-helper 1 (Th1) cell and natural killer (NK) cell immune responses. Upon binding to IL18R1 and IL18RAP, forms a signaling ternary complex which activates NF-kappa-B, triggering synthesis of inflammatory mediators. Synergizes with IL12/interleukin-12 to induce IFNG synthesis from T-helper 1 (Th1) cells and natural killer (NK) cells. Involved in transduction of inflammation downstream of pyroptosis: its mature form is specifically released in the extracellular milieu by passing through the gasdermin-D (GSDMD) pore. This Rattus norvegicus (Rat) protein is Interleukin-18 (Il18).